We begin with the raw amino-acid sequence, 159 residues long: Transcription elongation factor GreA (159 aa).

The stretch at 43–75 (LSENAEYDAAREEQSQLEAKIGEIENKLASATI) forms a coiled coil.

This sequence belongs to the GreA/GreB family.

In terms of biological role, necessary for efficient RNA polymerase transcription elongation past template-encoded arresting sites. The arresting sites in DNA have the property of trapping a certain fraction of elongating RNA polymerases that pass through, resulting in locked ternary complexes. Cleavage of the nascent transcript by cleavage factors such as GreA or GreB allows the resumption of elongation from the new 3'terminus. GreA releases sequences of 2 to 3 nucleotides. This is Transcription elongation factor GreA from Chlorobaculum tepidum (strain ATCC 49652 / DSM 12025 / NBRC 103806 / TLS) (Chlorobium tepidum).